Consider the following 121-residue polypeptide: Prefoldin subunit beta (121 aa).

The protein belongs to the prefoldin subunit beta family. As to quaternary structure, heterohexamer of two alpha and four beta subunits.

Its subcellular location is the cytoplasm. Its function is as follows. Molecular chaperone capable of stabilizing a range of proteins. Seems to fulfill an ATP-independent, HSP70-like function in archaeal de novo protein folding. The chain is Prefoldin subunit beta from Methanosphaerula palustris (strain ATCC BAA-1556 / DSM 19958 / E1-9c).